The sequence spans 135 residues: Small ribosomal subunit protein bS6 (135 aa).

Over residues 99–120 the composition is skewed to polar residues; it reads QHSSLGRSTAPANPMASNTPRT. The disordered stretch occupies residues 99-135; sequence QHSSLGRSTAPANPMASNTPRTEGQEQAKTEPQTAPA.

It belongs to the bacterial ribosomal protein bS6 family.

Its function is as follows. Binds together with bS18 to 16S ribosomal RNA. The sequence is that of Small ribosomal subunit protein bS6 from Synechococcus sp. (strain RCC307).